Reading from the N-terminus, the 213-residue chain is Flagellin A1 (213 aa).

A propeptide spanning residues 1 to 10 is cleaved from the precursor; it reads MFENINEDRG. N-linked (GlcNAc...) asparagine glycans are attached at residues Asn-70, Asn-115, and Asn-172.

It belongs to the archaeal flagellin family. Glycosylated by a pentasaccharide similar to the S-layer glycoprotein, probably comprising a hexose, 2 hexuronic acids, a methyl ester of a hexuronic acid and mannose. Glycosylation is required for biosynthesis of stable flagella.

The protein localises to the archaeal flagellum. In terms of biological role, major flagellin required for motility. Not involved in PibD-dependent surface adhesion. Much more abundant in cells compared to FlgA2. This is Flagellin A1 (flgA1) from Haloferax volcanii (strain ATCC 29605 / DSM 3757 / JCM 8879 / NBRC 14742 / NCIMB 2012 / VKM B-1768 / DS2) (Halobacterium volcanii).